The sequence spans 284 residues: MTAQIISGTEMARTIRTALADEAAQLKADGVEPGLAVILVGDDPASHSYVKGKQKACAEVGIRSFLYTFPAAIDEETLLAKIRELNVDPAVHGILVQLPLPDHICEWSVIETIAPEKDVDGFHPINVGKMMIGQRAFLPCTPHGILVMVQSAGIDIAGKHVVVVGRSNIVGKPVGQLFLREHATVTYTHSKTPDLAAITRQADILIVAVGKARLIGPEHIKPGAVVIDVGVNRLENGKLCGDVDFDAVKEVAGYITPVPGGVGPMTITMLLHNTIEAARQLAAK.

NADP(+)-binding positions include 165-167 (GRS), Ser-190, and Val-231.

This sequence belongs to the tetrahydrofolate dehydrogenase/cyclohydrolase family. Homodimer.

It carries out the reaction (6R)-5,10-methylene-5,6,7,8-tetrahydrofolate + NADP(+) = (6R)-5,10-methenyltetrahydrofolate + NADPH. The catalysed reaction is (6R)-5,10-methenyltetrahydrofolate + H2O = (6R)-10-formyltetrahydrofolate + H(+). Its pathway is one-carbon metabolism; tetrahydrofolate interconversion. Catalyzes the oxidation of 5,10-methylenetetrahydrofolate to 5,10-methenyltetrahydrofolate and then the hydrolysis of 5,10-methenyltetrahydrofolate to 10-formyltetrahydrofolate. This is Bifunctional protein FolD from Geobacillus kaustophilus (strain HTA426).